Reading from the N-terminus, the 174-residue chain is MATEVSTRFIFIKIDALSTLHFIDEGGALSMNGDSIEFLIGKSSLDKGLLKRATKLFTWLFSPEIAKQHLSITRSTESNVYMTDATRYKYIFPEYLLVRYVGTKFPDMKIVADATFKRRNPKGDVIGMLDLSFKEVRVKEVSETKAIELRDSNPGYLLSTTYRESESLPVVSKP.

Homomultimer. Interacts with nucleoprotein and with the cytoplasmic domain of glycoprotein.

It is found in the virion membrane. The protein localises to the host endomembrane system. Functionally, plays a major role in assembly and budding of virion. Completely covers the ribonucleoprotein coil and keep it in condensed bullet-shaped form. Inhibits viral transcription and stimulates replication. The chain is Matrix protein (M) from Hordeum vulgare (Barley).